A 399-amino-acid polypeptide reads, in one-letter code: Alpha-ketoglutarate-dependent dioxygenase fc-dox (399 aa).

His158 and Asp160 together coordinate Fe cation. Thr203 contacts 2-oxoglutarate. His355 is a Fe cation binding site. A 2-oxoglutarate-binding site is contributed by Arg367. Positions 371-399 (QGWLAGDRPPKGPVPIPDPRARSSIYYQK) are disordered.

This sequence belongs to the TfdA dioxygenase family. The cofactor is Fe(2+).

It functions in the pathway mycotoxin biosynthesis. In terms of biological role, alpha-ketoglutarate-dependent dioxygenase; part of the 2 gene clusters that mediate the biosynthesis of fusicoccins, diterpene glucosides that display phytohormone-like activity and function as potent activators of plasma membrane H(+)-ATPases in plants by modifying 14-3-3 proteins and cause the plant disease constriction canker. The first step in the pathway is performed by the fusicoccadiene synthase PaFS that possesses both prenyl transferase and terpene cyclase activity, converting isopentenyl diphosphate and dimethylallyl diphosphate into geranylgeranyl diphosphate (GGDP) and successively converting GGDP into fusicocca-2,10(14)-diene, a precursor for fusicoccin H. The second step is the oxidation at the C-8 position by the cytochrome P450 monooxygenase PaP450-2 to yield fusicocca-2,10(14)-diene-8-beta-ol. The cytochrome P450 monooxygenase PaP450-1 then catalyzes the hydroxylation at the C-16 position to produce fusicocca-2,10(14)-diene-8-beta,16-diol. The dioxygenase fc-dox then catalyzes the 16-oxydation of fusicocca-2,10(14)-diene-8-beta,16-diol to yield an aldehyde (8-beta-hydroxyfusicocca-1,10(14)-dien-16-al). The short-chain dehydrogenase/reductase fc-sdr catalyzes the reduction of the aldehyde to yield fusicocca-1,10(14)-diene-8-beta,16-diol. The next step is the hydroxylation at C-9 performed by the cytochrome P450 monooxygenase PaP450-3 that leads to fusicoccin H aglycon which is glycosylated to fusicoccin H by the O-glycosyltransferase PaGT. Hydroxylation at C-12 by the cytochrome P450 monooxygenase PaP450-4 leads then to the production of fusicoccin Q and is followed by methylation by the O-methyltransferase PaMT to yield fusicoccin P. Fusicoccin P is further converted to fusicoccin J via prenylation by the O-glucose prenyltransferase PaPT. Cytochrome P450 monooxygenase PaP450-5 then performs hydroxylation at C-19 to yield dideacetyl-fusicoccin A which is acetylated to 3'-O-deacetyl-fusicoccin A by the O-acetyltransferase PaAT-2. Finally, a another acetylation by the O-acetyltransferase PaAT-1 yields fusicoccin A. The chain is Alpha-ketoglutarate-dependent dioxygenase fc-dox from Phomopsis amygdali (Fusicoccum amygdali).